The sequence spans 299 residues: tRNA dimethylallyltransferase (299 aa).

ATP is bound at residue 11-18 (GPTAVGKT). Position 13 to 18 (13 to 18 (TAVGKT)) interacts with substrate. Positions 36 to 39 (DSQQ) are interaction with substrate tRNA.

The protein belongs to the IPP transferase family. In terms of assembly, monomer. Mg(2+) is required as a cofactor.

The catalysed reaction is adenosine(37) in tRNA + dimethylallyl diphosphate = N(6)-dimethylallyladenosine(37) in tRNA + diphosphate. Its function is as follows. Catalyzes the transfer of a dimethylallyl group onto the adenine at position 37 in tRNAs that read codons beginning with uridine, leading to the formation of N6-(dimethylallyl)adenosine (i(6)A). This chain is tRNA dimethylallyltransferase, found in Streptococcus pyogenes serotype M4 (strain MGAS10750).